Reading from the N-terminus, the 434-residue chain is MDPVEAYGRVKSSILEHHKWFDSSLPMIASENVTSPAVRKAMTSDFGHRYAEGWVGERVYAGTKYIDEVESIAMELVKRLFNVKFADVRPISGVVANLAVYTAFTNPGDVAMALPITKGGHISMGPLRGSEGQFIGGTAGAVRGLDVKYLAFDDHNMNVDVDKSIKRIEENKPKLVILGGSVILFPHPVKELSDVCKSVGALLHYDAAHVAGLIAGKQFQQPMEEGADVMTMSTHKTFFGPQHGAVITNDEEKFERIKLANFPGLLSNHHLHSVAALALAAAEMLAFGEEYARAVVRNAKALAQALHDEGFSVVAEHLGFTQSHQVLLDVDALGGGHRCEKLLEEANIIVNRNLLPWDIKRGRSFKDPGGLRLGVSELTRLGMGEEEMKEIAKLYRKVLLDREDPKKVAGEVSELRKRFRNVKYAFEEGPAYEY.

120-122 (GHI) contacts (6S)-5,6,7,8-tetrahydrofolate. Lysine 236 is subject to N6-(pyridoxal phosphate)lysine. Glutamate 255 serves as a coordination point for (6S)-5,6,7,8-tetrahydrofolate.

This sequence belongs to the SHMT family. In terms of assembly, homodimer. The cofactor is pyridoxal 5'-phosphate.

It localises to the cytoplasm. It participates in amino-acid biosynthesis; glycine biosynthesis; glycine from L-serine: step 1/1. Functionally, catalyzes the reversible interconversion of serine and glycine with a modified folate serving as the one-carbon carrier. Also exhibits a pteridine-independent aldolase activity toward beta-hydroxyamino acids, producing glycine and aldehydes, via a retro-aldol mechanism. This chain is Serine hydroxymethyltransferase, found in Korarchaeum cryptofilum (strain OPF8).